A 259-amino-acid chain; its full sequence is 5'-nucleotidase SurE (259 aa).

The a divalent metal cation site is built by aspartate 8, aspartate 9, serine 40, and asparagine 92.

This sequence belongs to the SurE nucleotidase family. The cofactor is a divalent metal cation.

It is found in the cytoplasm. It carries out the reaction a ribonucleoside 5'-phosphate + H2O = a ribonucleoside + phosphate. Its function is as follows. Nucleotidase that shows phosphatase activity on nucleoside 5'-monophosphates. The chain is 5'-nucleotidase SurE from Xanthomonas oryzae pv. oryzae (strain MAFF 311018).